A 295-amino-acid chain; its full sequence is Urease accessory protein UreD (295 aa).

Belongs to the UreD family. UreD, UreF and UreG form a complex that acts as a GTP-hydrolysis-dependent molecular chaperone, activating the urease apoprotein by helping to assemble the nickel containing metallocenter of UreC. The UreE protein probably delivers the nickel.

Its subcellular location is the cytoplasm. In terms of biological role, required for maturation of urease via the functional incorporation of the urease nickel metallocenter. The chain is Urease accessory protein UreD from Ralstonia nicotianae (strain ATCC BAA-1114 / GMI1000) (Ralstonia solanacearum).